A 162-amino-acid polypeptide reads, in one-letter code: Transcriptional regulator MraZ (162 aa).

SpoVT-AbrB domains follow at residues 11–62 (EHPS…GLSV) and 98–141 (AVEC…SRDT).

Belongs to the MraZ family. In terms of assembly, forms oligomers.

Its subcellular location is the cytoplasm. The protein localises to the nucleoid. This Pelobacter propionicus (strain DSM 2379 / NBRC 103807 / OttBd1) protein is Transcriptional regulator MraZ.